The sequence spans 142 residues: Transcriptional regulator MraZ (142 aa).

SpoVT-AbrB domains are found at residues 5–51 (ASAL…PRPE) and 77–120 (AMDV…DAQT).

This sequence belongs to the MraZ family. As to quaternary structure, forms oligomers.

The protein localises to the cytoplasm. The protein resides in the nucleoid. The polypeptide is Transcriptional regulator MraZ (Burkholderia mallei (strain NCTC 10247)).